Reading from the N-terminus, the 847-residue chain is MPDSEPLEPLNQESSSNTEQLKLSTTPNIPARPQTRPQKQTTTTTTVPTDQDSTTETSLEKPLDNPQDELDELAHEIEKVLSDPVIPPRPEHGSSTKSSETQTEHKEQDFEPAHPAIPQRPTNKKETIQSEVSDHKNGLESKFDLKVNEETPADSVSTDKDKVHIKPSIPTIPSRPQSRNLDSSEVDNTKPSTTASIPARPQRQSTSTQDEYKPQASNTPDIPTRPQTKTEKSVSSEELDKPGDEPSSKDQDNERYTDDSNASKSILETEKAVAQEEKKAKKSDVDNKPSEPTTSTDSSTEPAAPARGFRLPLHMQQGSGPISTSTPVAGSEAELNSLNNSNTFGDGEVTPGNSDTKATFKNDEDVENENRTDSSSFDDDMETISQDNEDGEQDRRNRQETATEENAQESEAPQFETTIIESGETEERDGDDTDSGELYSEQQQNKEKEKIVPATSTPKIPQRPPKKSSLSRATTNDSLTSLDSTSKPPKPVIPKRPTTEESLSNIEPTIPSRPATKKITSVGESQHEPIVPNRPDNKDLESSQRDTQASVKSKPPPPKPKKLSSKIAAFQQQLFNPANASSKEDVSSTGSKQPESGIRKRSTENSVLSRFGGKAIPLPGMFNPNQMPKPSISHGEETSDDREEKQESATANAPVRRTRGPRGKKLPKAVADAEVKTESRFAIESGKLWSIEFKKKIVEEKEITSTSVEDLEKPKILSENDEAGDEGKETAVENEVIDNPEIPVKDELQHDVVDVVGHPEKDVVTGLDDDDEDVPPEVNERFIKDEEISNVGVERTIASETTTEKHSTDEEEVEEEAVVDSVDIPIRRVAVNIVDSTEVQKDVEDEP.

3 disordered regions span residues 1–675, 704–740, and 799–818; these read MPDS…DAEV, TSTS…IDNP, and SETT…EEAV. Residues 11–28 show a composition bias toward polar residues; the sequence is NQESSSNTEQLKLSTTPN. Residues 31–57 are compositionally biased toward low complexity; the sequence is ARPQTRPQKQTTTTTTVPTDQDSTTET. Composition is skewed to basic and acidic residues over residues 72–81, 102–112, and 123–149; these read ELAHEIEKVL, QTEHKEQDFEP, and NKKE…KVNE. Polar residues-rich tracts occupy residues 174 to 183 and 189 to 227; these read SRPQSRNLDS and TKPS…TRPQ. 2 stretches are compositionally biased toward basic and acidic residues: residues 228–258 and 267–289; these read TKTE…RYTD and LETE…DNKP. Over residues 290 to 306 the composition is skewed to low complexity; sequence SEPTTSTDSSTEPAAPA. Polar residues predominate over residues 316-328; the sequence is QQGSGPISTSTPV. The span at 358-372 shows a compositional bias: basic and acidic residues; sequence ATFKNDEDVENENRT. 2 stretches are compositionally biased toward acidic residues: residues 376–392 and 423–435; these read SFDD…EDGE and GETE…DTDS. Over residues 474–486 the composition is skewed to low complexity; that stretch reads TTNDSLTSLDSTS. Residues 535-544 are compositionally biased toward basic and acidic residues; the sequence is PDNKDLESSQ. Positions 570–594 are enriched in polar residues; sequence FQQQLFNPANASSKEDVSSTGSKQP. Over residues 634 to 647 the composition is skewed to basic and acidic residues; sequence HGEETSDDREEKQE. A compositionally biased stretch (basic residues) spans 656-667; it reads RRTRGPRGKKLP. Over residues 809-818 the composition is skewed to acidic residues; it reads DEEEVEEEAV.

Belongs to the AIM21 family.

Its subcellular location is the cytoplasm. It localises to the cytoskeleton. The protein localises to the actin patch. Functionally, involved in mitochondrial migration along actin filaments. The sequence is that of Altered inheritance of mitochondria protein 21 (AIM21) from Candida albicans (strain WO-1) (Yeast).